Here is a 186-residue protein sequence, read N- to C-terminus: Putative CTD phosphatase-like protein 355R (186 aa).

Positions 2 to 182 (ENNKKKLILL…TELLKVQKTL (181 aa)) constitute an FCP1 homology domain.

The protein belongs to the IIV-6 355R family.

May function as a phosphatase. The sequence is that of Putative CTD phosphatase-like protein 355R from Aedes vexans (Inland floodwater mosquito).